A 269-amino-acid chain; its full sequence is Protein MGF 110-1L (269 aa).

Met1 is a topological domain (cytoplasmic). Residues 1–145 (MLGLQIFTLL…YVRKRSLQTV (145 aa)) form an A repeat. Residues 2 to 18 (LGLQIFTLLSIPTLLYT) form a helical membrane-spanning segment. The Extracellular segment spans residues 19 to 116 (YELELLDLTR…HEWHEAVIRK (98 aa)). Residue Asn75 is glycosylated (N-linked (GlcNAc...) asparagine; by host). A helical membrane pass occupies residues 117–137 (WQKLLTYGFYLVGCVLVANYV). Residues 138-144 (RKRSLQT) lie on the Cytoplasmic side of the membrane. A helical transmembrane segment spans residues 145-165 (VMYLLVLLVIFFLLSQLMLYR). One copy of the B repeat lies at 147–269 (YLLVLLVIFF…DNLMKKQDMM (123 aa)). Topologically, residues 166-269 (ELEDKKHKIG…DNLMKKQDMM (104 aa)) are extracellular.

The protein belongs to the asfivirus MGF 110 family.

The protein resides in the host membrane. Its function is as follows. Plays a role in virus cell tropism, and may be required for efficient virus replication in macrophages. This African swine fever virus (isolate Tick/South Africa/Pretoriuskop Pr4/1996) (ASFV) protein is Protein MGF 110-1L.